The primary structure comprises 302 residues: Ribosomal RNA small subunit methyltransferase H (302 aa).

Residues 43 to 45 (GGH), Asp62, Phe89, Asp105, and His112 each bind S-adenosyl-L-methionine. Positions 276-302 (EIANNPRSRSAKLRIAEKQAETGDEDN) are disordered.

This sequence belongs to the methyltransferase superfamily. RsmH family.

It localises to the cytoplasm. The catalysed reaction is cytidine(1402) in 16S rRNA + S-adenosyl-L-methionine = N(4)-methylcytidine(1402) in 16S rRNA + S-adenosyl-L-homocysteine + H(+). Specifically methylates the N4 position of cytidine in position 1402 (C1402) of 16S rRNA. The sequence is that of Ribosomal RNA small subunit methyltransferase H from Nostoc sp. (strain PCC 7120 / SAG 25.82 / UTEX 2576).